A 638-amino-acid polypeptide reads, in one-letter code: Threonine--tRNA ligase 2 (638 aa).

Residues 1-64 (MSKHVHIQLP…EEDAELSIVT (64 aa)) enclose the TGS domain. Residues 245-535 (DHRKLGKQLG…LIEHYGGAFP (291 aa)) are catalytic. Zn(2+) contacts are provided by cysteine 336, histidine 387, and histidine 512.

It belongs to the class-II aminoacyl-tRNA synthetase family. In terms of assembly, homodimer. Zn(2+) is required as a cofactor.

Its subcellular location is the cytoplasm. It carries out the reaction tRNA(Thr) + L-threonine + ATP = L-threonyl-tRNA(Thr) + AMP + diphosphate + H(+). Functionally, catalyzes the attachment of threonine to tRNA(Thr) in a two-step reaction: L-threonine is first activated by ATP to form Thr-AMP and then transferred to the acceptor end of tRNA(Thr). Also edits incorrectly charged L-seryl-tRNA(Thr). This is Threonine--tRNA ligase 2 (thrZ) from Bacillus subtilis (strain 168).